The primary structure comprises 1663 residues: Cortactin-binding protein 2 (1663 aa).

5 disordered regions span residues 1–23 (MATD…AGAA), 203–222 (KKKT…RSTE), 352–440 (ARPG…LHPG), 454–478 (GNAN…SPTS), and 498–616 (RFTS…PKPS). The stretch at 119 to 276 (KKMQERMSAQ…EQLKRGSDSK (158 aa)) forms a coiled coil. The segment covering 384-396 (NGPSTGSTPDPTS) has biased composition (low complexity). Polar residues predominate over residues 411 to 422 (QTPGIAPQNSQA). R498 carries the post-translational modification Asymmetric dimethylarginine. Positions 583–593 (TVASPPSSLPQ) are enriched in polar residues. ANK repeat units follow at residues 709 to 739 (GRPT…DINY), 743 to 772 (DGHS…QVNA), 776 to 805 (NGFT…NINH), 809 to 838 (GGQT…NRSV), and 842 to 871 (DGWT…LARG). The segment at 876–897 (EEGSESSVFDLDGGEESPEGIS) is disordered. Residues 912 to 942 (EGWTAAHIAASKGFKNCLEILCRHGGLEPER) form an ANK 6 repeat. A disordered region spans residues 1446-1485 (NKKKGESGAWRKVNTSPRRKSGRFSLPTWNKPDLSTEGMK). S1524 bears the Phosphoserine mark. 2 disordered regions span residues 1580–1602 (SQKE…KSKT) and 1615–1663 (VPRS…KPNK). Polar residues predominate over residues 1582 to 1599 (KEVSPLSSHQTTECSNSK). Positions 1624 to 1638 (SQNTKRSSSSSNTRQ) are enriched in low complexity. Positions 1645-1663 (SKEENWNLHKNEHLEKPNK) are enriched in basic and acidic residues.

As to quaternary structure, interacts with CTTN/cortactin SH3 domain. Interacts with STRN, STRN4/zinedin and MOB4/phocein; this interactions mediate the association with the STRIPAK core complex and may regulate dendritic spine distribution of the STRIPAK complex in hippocampal neurons. Activation of glutamate receptors weakens the interaction with STRN and STRN4.

It localises to the cytoplasm. Its subcellular location is the cell cortex. The protein localises to the cell projection. It is found in the dendritic spine. In terms of biological role, regulates the dendritic spine distribution of CTTN/cortactin in hippocampal neurons, and thus controls dendritic spinogenesis and dendritic spine maintenance. Associates with the striatin-interacting phosphatase and kinase (STRIPAK) core complex to regulate dendritic spine distribution of the STRIPAK complex in hippocampal neurons. The chain is Cortactin-binding protein 2 (CTTNBP2) from Nomascus leucogenys (Northern white-cheeked gibbon).